Consider the following 130-residue polypeptide: DNA-directed RNA polymerase subunit omega (130 aa).

The segment at 109–130 is disordered; sequence EEELLKGLEGLAPPEEQPEEDE.

The protein belongs to the RNA polymerase subunit omega family. In terms of assembly, the RNAP catalytic core consists of 2 alpha, 1 beta, 1 beta' and 1 omega subunit. When a sigma factor is associated with the core the holoenzyme is formed, which can initiate transcription.

It catalyses the reaction RNA(n) + a ribonucleoside 5'-triphosphate = RNA(n+1) + diphosphate. Functionally, promotes RNA polymerase assembly. Latches the N- and C-terminal regions of the beta' subunit thereby facilitating its interaction with the beta and alpha subunits. The chain is DNA-directed RNA polymerase subunit omega from Rhodopseudomonas palustris (strain BisA53).